We begin with the raw amino-acid sequence, 473 residues long: Phosphatidylserine synthase 1 (473 aa).

The residue at position 2 (alanine 2) is an N-acetylalanine. Topologically, residues 2–35 (ASCVGSRTLSKDDVNYRMHFRMINEQQVEDITID) are cytoplasmic. A helical membrane pass occupies residues 36 to 56 (FFYRPHTITLLSFTIISLMYF). Residues 57–72 (AFTRDDCVPEDNIWRG) lie on the Lumenal side of the membrane. Residues 73-93 (ILSVIFFFLIISVLAFPNGPF) traverse the membrane as a helical segment. Residues 94 to 102 (TRPHPALWR) are Cytoplasmic-facing. A helical membrane pass occupies residues 103 to 123 (MVFGLSVLYFLFLVFLLFLNF). At 124-186 (EQVKSLMYWL…AMKALLIRSY (63 aa)) the chain is on the lumenal side. A helical transmembrane segment spans residues 187–207 (GLCWTISITWELTELFFMHLL). The Cytoplasmic portion of the chain corresponds to 208 to 216 (PNFAECWWD). The helical transmembrane segment at 217 to 237 (QVILDILLCNGGGIWLGMVVC) threads the bilayer. Topologically, residues 238–286 (RFLEMRTYHWASFKDIHTTTGKIKRAVLQFTPASWTYVRWFDPKSSFQR) are lumenal. Residues 287 to 307 (VAGIYLFMIIWQLTELNTFFL) traverse the membrane as a helical segment. Over 308 to 319 (KHIFVFQASHPL) the chain is Cytoplasmic. Residues 320-342 (SWCRILFIGCITAPTVRQYYAYL) form a helical membrane-spanning segment. At 343–355 (TDTQCKRVGTQCW) the chain is on the lumenal side. Residues 356–376 (VFGVIGFLEAIVCIKFGQDLF) form a helical membrane-spanning segment. Over 377–383 (SKTQILY) the chain is Cytoplasmic. Residues 384 to 404 (VVLWLLCVAFTTFLCLYGMVW) traverse the membrane as a helical segment. Topologically, residues 405 to 473 (YAEHYGHREK…SKVTNGVGKK (69 aa)) are lumenal. 4 positions are modified to phosphoserine: serine 417, serine 425, serine 442, and serine 454. Positions 430–473 (WYHGKGSKGSEDSPPKHSNNNESHSSRRRNRHSKSKVTNGVGKK) are disordered. Residues 455 to 464 (SRRRNRHSKS) show a composition bias toward basic residues.

Belongs to the phosphatidyl serine synthase family.

The protein resides in the endoplasmic reticulum membrane. It carries out the reaction a 1,2-diacyl-sn-glycero-3-phosphoethanolamine + L-serine = a 1,2-diacyl-sn-glycero-3-phospho-L-serine + ethanolamine. The enzyme catalyses a 1,2-diacyl-sn-glycero-3-phosphocholine + L-serine = a 1,2-diacyl-sn-glycero-3-phospho-L-serine + choline. The protein operates within phospholipid metabolism; phosphatidylserine biosynthesis. Catalyzes a base-exchange reaction in which the polar head group of phosphatidylethanolamine (PE) or phosphatidylcholine (PC) is replaced by L-serine. Catalyzes mainly the conversion of phosphatidylcholine but also converts, in vitro and to a lesser extent, phosphatidylethanolamine. The polypeptide is Phosphatidylserine synthase 1 (Ptdss1) (Rattus norvegicus (Rat)).